Consider the following 344-residue polypeptide: Protein Tob2 (344 aa).

2 disordered regions span residues 144–169 and 191–225; these read GSQD…FIPR and MKKG…SPTN. Over residues 145–164 the composition is skewed to low complexity; it reads SQDSSLSNSPSPSFGQSPSP. Positions 194–210 are enriched in gly residues; that stretch reads GGGAASGGGVASSGAGG. The segment covering 211 to 225 has biased composition (low complexity); sequence QQPPQQPRMARSPTN. Ser-254 is modified (phosphoserine).

The protein belongs to the BTG family. As to quaternary structure, associates with CAF1. As to expression, ubiquitous.

Its subcellular location is the cytoplasm. Anti-proliferative protein inhibits cell cycle progression from the G0/G1 to S phases. This Homo sapiens (Human) protein is Protein Tob2 (TOB2).